A 408-amino-acid polypeptide reads, in one-letter code: Transmembrane protein 237 (408 aa).

Residues 1–14 show a composition bias toward basic and acidic residues; the sequence is MRTDSGARLEEGHL. Residues 1–137 form a disordered region; it reads MRTDSGARLE…RRKTKKTQPA (137 aa). 2 positions are modified to phosphoserine: S25 and S49. Positions 60–77 are enriched in basic and acidic residues; the sequence is RPSEGNEPSTKELKEHPE. Positions 95 to 106 are enriched in low complexity; it reads TSSTQKKSSSSS. 4 consecutive transmembrane segments (helical) span residues 227–247, 268–288, 303–323, and 358–378; these read MIGLFSHGFLAGCAVWNIVVI, LAYPFQSLLYLLLALSTISAF, FLALDPTALASFLYFTALILS, and WIVVNLVVALLVGLSWLFLSY.

This sequence belongs to the TMEM237 family. Part of the tectonic-like complex (also named B9 complex). Interacts with TMEM107.

It localises to the membrane. Its subcellular location is the cell projection. The protein resides in the cilium. In terms of biological role, component of the transition zone in primary cilia. Required for ciliogenesis. The polypeptide is Transmembrane protein 237 (TMEM237) (Homo sapiens (Human)).